The following is a 359-amino-acid chain: RNA-binding protein 4B (359 aa).

2 RRM domains span residues 2–72 (VKLF…ASKN) and 78–148 (TKLH…LSTS). Residues 160-177 (SGCYRCGKEGHWSKECPV) form a CCHC-type zinc finger. Residues 196 to 359 (AVRPPYTMGY…YVDRARYSAF (164 aa)) are interaction with TNPO3.

Interacts with TNPO3, which may mediate nuclear import of the protein.

It localises to the nucleus. Its subcellular location is the nucleolus. Functionally, required for the translational activation of PER1 mRNA in response to circadian clock. Binds directly to the 3'-UTR of the PER1 mRNA. The chain is RNA-binding protein 4B (RBM4B) from Sus scrofa (Pig).